The primary structure comprises 538 residues: Reticuline oxidase (538 aa).

An N-terminal signal peptide occupies residues 1–23 (MENKTPIFFSLSIFLSLLNCALG). Cysteines 30 and 89 form a disulfide. An N-linked (GlcNAc...) asparagine glycan is attached at Asn38. The region spanning 67–241 (LISKPSAIIL…YAWKIKLLPV (175 aa)) is the FAD-binding PCMH-type domain. The segment at residues 104–166 (HSYEGLSYTS…SKLGFTAGWC (63 aa)) is a cross-link (6-(S-cysteinyl)-8alpha-(pros-histidyl)-FAD (His-Cys)). Residues Asn423 and Asn471 are each glycosylated (N-linked (GlcNAc...) asparagine).

Belongs to the oxygen-dependent FAD-linked oxidoreductase family. FAD serves as cofactor. Requires a metal cation as cofactor. In terms of processing, the FAD cofactor is bound via a bicovalent 6-S-cysteinyl, 8alpha-N1-histidyl FAD linkage.

It is found in the cytoplasmic vesicle. It catalyses the reaction (S)-reticuline + O2 = (S)-scoulerine + H2O2 + H(+). It participates in alkaloid biosynthesis; (S)-scoulerine biosynthesis; (S)-scoulerine from (S)-reticuline: step 1/1. Essential to the formation of benzophenanthridine alkaloids in the response of plants to pathogenic attack. Catalyzes the stereospecific conversion of the N-methyl moiety of (S)-reticuline into the berberine bridge carbon of (S)-scoulerine. This Eschscholzia californica (California poppy) protein is Reticuline oxidase (BBE1).